We begin with the raw amino-acid sequence, 370 residues long: 3,5-dihydroxyphenylacetyl-CoA synthase (370 aa).

Residue Cys158 is part of the active site.

It belongs to the thiolase-like superfamily. Chalcone/stilbene synthases family.

The catalysed reaction is 4 malonyl-CoA + 4 H(+) = (3,5-dihydroxyphenyl)acetyl-CoA + 4 CO2 + 3 CoA + H2O. The protein operates within antibiotic biosynthesis; vancomycin biosynthesis. Functionally, involved in the biosynthesis of the nonproteinogenic amino acid monomer (S)-3,5-dihydroxyphenylglycine (Dpg) responsible of the production of vancomycin and teicoplanin antibiotics. Catalyzes the Claisen condensation of four molecules of malonyl-CoA to yield 3,5-dihydroxyphenylacetyl-CoA (DPA-CoA) and three free coenzyme A (CoA). DpgA requires the presence of the dehydratases DpgB and DpgD to facilitate the aromatization of the DPA-S-DgpA or DPA-S-CoA intermediate. This is 3,5-dihydroxyphenylacetyl-CoA synthase (dpgA) from Amycolatopsis orientalis (Nocardia orientalis).